The primary structure comprises 802 residues: Lon protease (802 aa).

The 195-residue stretch at 17 to 211 (SIVMPLFEVV…LFLHILTKHK (195 aa)) folds into the Lon N-terminal domain. An ATP-binding site is contributed by 363-370 (GPPGTGKT). Residues 600–780 (ENVPGVVTGL…EEVLREALDI (181 aa)) enclose the Lon proteolytic domain. Active-site residues include Ser-686 and Lys-729.

The protein belongs to the peptidase S16 family. As to quaternary structure, homohexamer. Organized in a ring with a central cavity.

The protein resides in the cytoplasm. It carries out the reaction Hydrolysis of proteins in presence of ATP.. ATP-dependent serine protease that mediates the selective degradation of mutant and abnormal proteins as well as certain short-lived regulatory proteins. Required for cellular homeostasis and for survival from DNA damage and developmental changes induced by stress. Degrades polypeptides processively to yield small peptide fragments that are 5 to 10 amino acids long. Binds to DNA in a double-stranded, site-specific manner. The sequence is that of Lon protease from Methanosarcina barkeri (strain Fusaro / DSM 804).